The sequence spans 337 residues: Ornithine carbamoyltransferase (337 aa).

Carbamoyl phosphate is bound by residues 56 to 59 (STRT), Gln83, Arg107, and 134 to 137 (HPTQ). Residues Asn168, Asp232, and 236 to 237 (SM) contribute to the L-ornithine site. Carbamoyl phosphate contacts are provided by residues 274-275 (CL) and Arg320.

It belongs to the aspartate/ornithine carbamoyltransferase superfamily. OTCase family.

It localises to the cytoplasm. The catalysed reaction is carbamoyl phosphate + L-ornithine = L-citrulline + phosphate + H(+). The protein operates within amino-acid biosynthesis; L-arginine biosynthesis; L-arginine from L-ornithine and carbamoyl phosphate: step 1/3. Functionally, reversibly catalyzes the transfer of the carbamoyl group from carbamoyl phosphate (CP) to the N(epsilon) atom of ornithine (ORN) to produce L-citrulline. The sequence is that of Ornithine carbamoyltransferase (argI) from Shigella flexneri.